Consider the following 501-residue polypeptide: Carotenoid cleavage oxygenase (501 aa).

4 residues coordinate Fe cation: His-162, His-211, His-314, and His-494.

It belongs to the carotenoid oxygenase family. Fe(2+) is required as a cofactor.

Its function is as follows. Catalyzes the oxidative cleavage of several carotenoids and apocarotenoids in vitro. In Mycobacterium tuberculosis (strain CDC 1551 / Oshkosh), this protein is Carotenoid cleavage oxygenase.